A 414-amino-acid chain; its full sequence is Translation initiation factor 2 subunit gamma (414 aa).

A tr-type G domain is found at 8-206; the sequence is QPEVNIGVVG…AIEKFIPTPP (199 aa). The interval 17 to 24 is G1; it reads GHVDHGKT. The Mg(2+) site is built by aspartate 20, threonine 24, glycine 45, and threonine 47. 20-25 is a binding site for GTP; the sequence is DHGKTT. The interval 45 to 49 is G2; sequence GMTIK. Zn(2+)-binding residues include cysteine 60, cysteine 63, cysteine 75, and cysteine 77. Residues 93-96 are G3; sequence DAPG. Residues 149–152 and 184–186 each bind GTP; these read NKVD and SAL. A G4 region spans residues 149-152; it reads NKVD. The interval 184 to 186 is G5; that stretch reads SAL.

It belongs to the TRAFAC class translation factor GTPase superfamily. Classic translation factor GTPase family. EIF2G subfamily. In terms of assembly, heterotrimer composed of an alpha, a beta and a gamma chain. Requires Mg(2+) as cofactor.

The enzyme catalyses GTP + H2O = GDP + phosphate + H(+). Functionally, eIF-2 functions in the early steps of protein synthesis by forming a ternary complex with GTP and initiator tRNA. The protein is Translation initiation factor 2 subunit gamma of Aeropyrum pernix (strain ATCC 700893 / DSM 11879 / JCM 9820 / NBRC 100138 / K1).